The primary structure comprises 464 residues: Dihydrolipoyl dehydrogenase (464 aa).

FAD is bound by residues 36–44 (EGAALGGTC), lysine 53, and alanine 119. A disulfide bond links cysteine 44 and cysteine 49. NAD(+) contacts are provided by residues 184–188 (GGGYI), glutamate 207, and 269–272 (AVGR). Positions 311 and 319 each coordinate FAD. Histidine 443 functions as the Proton acceptor in the catalytic mechanism.

The protein belongs to the class-I pyridine nucleotide-disulfide oxidoreductase family. As to quaternary structure, homodimer. It depends on FAD as a cofactor.

The protein resides in the cytoplasm. It catalyses the reaction N(6)-[(R)-dihydrolipoyl]-L-lysyl-[protein] + NAD(+) = N(6)-[(R)-lipoyl]-L-lysyl-[protein] + NADH + H(+). The branched-chain alpha-keto dehydrogenase complex catalyzes the overall conversion of alpha-keto acids to acyl-CoA and CO(2). It contains multiple copies of 3 enzymatic components: branched-chain alpha-keto acid decarboxylase (E1), lipoamide acyltransferase (E2) and lipoamide dehydrogenase (E3). The polypeptide is Dihydrolipoyl dehydrogenase (Pseudomonas aeruginosa (strain ATCC 15692 / DSM 22644 / CIP 104116 / JCM 14847 / LMG 12228 / 1C / PRS 101 / PAO1)).